We begin with the raw amino-acid sequence, 124 residues long: Thioredoxin domain-containing protein C21C3.12c (124 aa).

The Thioredoxin domain occupies 37–124 (PWCPTVRAAL…ANKFSKFIDI (88 aa)). The active-site Nucleophile is Cys39.

It belongs to the thioredoxin family.

It is found in the cytoplasm. It localises to the nucleus. This is Thioredoxin domain-containing protein C21C3.12c from Schizosaccharomyces pombe (strain 972 / ATCC 24843) (Fission yeast).